Here is a 444-residue protein sequence, read N- to C-terminus: Phosphoglucosamine mutase (444 aa).

Ser101 (phosphoserine intermediate) is an active-site residue. Mg(2+)-binding residues include Ser101, Asp240, Asp242, and Asp244. Ser101 is modified (phosphoserine).

This sequence belongs to the phosphohexose mutase family. It depends on Mg(2+) as a cofactor. Post-translationally, activated by phosphorylation.

It catalyses the reaction alpha-D-glucosamine 1-phosphate = D-glucosamine 6-phosphate. Catalyzes the conversion of glucosamine-6-phosphate to glucosamine-1-phosphate. In Sphingopyxis alaskensis (strain DSM 13593 / LMG 18877 / RB2256) (Sphingomonas alaskensis), this protein is Phosphoglucosamine mutase.